Consider the following 107-residue polypeptide: Phosphoribosyl-ATP pyrophosphatase (107 aa).

This sequence belongs to the PRA-PH family.

Its subcellular location is the cytoplasm. The enzyme catalyses 1-(5-phospho-beta-D-ribosyl)-ATP + H2O = 1-(5-phospho-beta-D-ribosyl)-5'-AMP + diphosphate + H(+). Its pathway is amino-acid biosynthesis; L-histidine biosynthesis; L-histidine from 5-phospho-alpha-D-ribose 1-diphosphate: step 2/9. This is Phosphoribosyl-ATP pyrophosphatase from Rhizobium etli (strain CIAT 652).